A 360-amino-acid chain; its full sequence is Flavone O-methyltransferase 1 (360 aa).

127 to 133 (MNQDKVL) contributes to the substrate binding site. The interval 159–177 (AFEYHGTDPRFNRVFNEGM) is substrate binding. S-adenosyl-L-methionine is bound by residues Gly-205, Asp-228, Asp-248, Met-249, and Lys-262. The Proton acceptor role is filled by His-266.

Belongs to the class I-like SAM-binding methyltransferase superfamily. Cation-independent O-methyltransferase family. COMT subfamily. In terms of assembly, homodimer.

Its function is as follows. Flavone-specific O-methyltransferase with a preference for flavones &gt; flavonols. Active with tricetin, luteolin, quercitin and eriodictyol. Very low activity with phenylpropanoids (5-hydroxyferulic acid and caffeic acid). Catalyzes the sequential O-methylation of tricetin via 3'-O-methyltricetin, 3',5'-O-methyltricetin to 3',4',5'-O-trimethyltricetin. The chain is Flavone O-methyltransferase 1 (OMT1) from Triticum aestivum (Wheat).